The sequence spans 556 residues: Arginine--tRNA ligase (556 aa).

The 'HIGH' region signature appears at 132–142; that stretch reads ANPTGPIHLGG.

This sequence belongs to the class-I aminoacyl-tRNA synthetase family. Monomer.

Its subcellular location is the cytoplasm. The enzyme catalyses tRNA(Arg) + L-arginine + ATP = L-arginyl-tRNA(Arg) + AMP + diphosphate. In Kocuria rhizophila (strain ATCC 9341 / DSM 348 / NBRC 103217 / DC2201), this protein is Arginine--tRNA ligase.